A 679-amino-acid polypeptide reads, in one-letter code: tRNA uridine 5-carboxymethylaminomethyl modification enzyme MnmG (679 aa).

FAD is bound at residue 15-20 (GAGHAG). Residue 314–328 (GPRYCPSIEDKIVRF) coordinates NAD(+).

Belongs to the MnmG family. In terms of assembly, homodimer. Heterotetramer of two MnmE and two MnmG subunits. The cofactor is FAD.

Its subcellular location is the cytoplasm. In terms of biological role, NAD-binding protein involved in the addition of a carboxymethylaminomethyl (cmnm) group at the wobble position (U34) of certain tRNAs, forming tRNA-cmnm(5)s(2)U34. This is tRNA uridine 5-carboxymethylaminomethyl modification enzyme MnmG from Roseiflexus sp. (strain RS-1).